A 331-amino-acid polypeptide reads, in one-letter code: Beta-ketoacyl-[acyl-carrier-protein] synthase III (331 aa).

Active-site residues include Cys116 and His256. Residues 257–261 (QANTR) are ACP-binding. Asn286 is a catalytic residue.

The protein belongs to the thiolase-like superfamily. FabH family. Homodimer.

It localises to the cytoplasm. The catalysed reaction is malonyl-[ACP] + acetyl-CoA + H(+) = 3-oxobutanoyl-[ACP] + CO2 + CoA. It functions in the pathway lipid metabolism; fatty acid biosynthesis. In terms of biological role, catalyzes the condensation reaction of fatty acid synthesis by the addition to an acyl acceptor of two carbons from malonyl-ACP. Catalyzes the first condensation reaction which initiates fatty acid synthesis and may therefore play a role in governing the total rate of fatty acid production. Possesses both acetoacetyl-ACP synthase and acetyl transacylase activities. Its substrate specificity determines the biosynthesis of branched-chain and/or straight-chain of fatty acids. This Caldanaerobacter subterraneus subsp. tengcongensis (strain DSM 15242 / JCM 11007 / NBRC 100824 / MB4) (Thermoanaerobacter tengcongensis) protein is Beta-ketoacyl-[acyl-carrier-protein] synthase III.